We begin with the raw amino-acid sequence, 374 residues long: C-X-C chemokine receptor type 5 (374 aa).

Topologically, residues 1 to 57 (MNSPISLDMGAITYNMDDLYKELAIYSNSTEIPLQDSIFCSTEEGPLLTSFKTIFMP) are extracellular. Residue asparagine 28 is glycosylated (N-linked (GlcNAc...) asparagine). A helical transmembrane segment spans residues 58 to 78 (VAYSLIFLLGMMGNILVLVIL). Residues 79–90 (ERHRHTRSSTET) lie on the Cytoplasmic side of the membrane. A helical transmembrane segment spans residues 91–111 (FLFHLAVADLLLVFILPFAVA). Residues 112–126 (EGSVGWVLGTFLCKT) lie on the Extracellular side of the membrane. Cysteine 124 and cysteine 204 form a disulfide bridge. Residues 127-147 (VIALHKINFYCSSLLLACIAV) traverse the membrane as a helical segment. Over 148–169 (DRYLAIVHAVHAYRRRRLLSIH) the chain is Cytoplasmic. The helical transmembrane segment at 170–190 (ITCSTIWLAGFLFALPELLFA) threads the bilayer. The Extracellular portion of the chain corresponds to 191 to 221 (KVVQPHNNESLPQCIFSQENEAETRAWFASR). The N-linked (GlcNAc...) asparagine glycan is linked to asparagine 198. The chain crosses the membrane as a helical span at residues 222-242 (FLYHTGGFLLPMLVMAWCYVG). The Cytoplasmic portion of the chain corresponds to 243–261 (VVHRLLQAQRRPQRQKAVR). A helical membrane pass occupies residues 262–282 (VAILVTSIFLLCWSPYHIVIF). Over 283–306 (LDTLERLKAVNSSCELSGYLSVAI) the chain is Extracellular. Residues 307 to 327 (TLCEFLGLAHCCLNPMLYTFA) traverse the membrane as a helical segment. The Cytoplasmic portion of the chain corresponds to 328–374 (GVKFRSDLSRLLTKLGCAGPASLCQLFPGWRKSSLSESENATSLTTF).

Belongs to the G-protein coupled receptor 1 family. Expressed in neuronal and lymphatic tissue.

The protein resides in the cell membrane. Functionally, cytokine receptor that binds to B-lymphocyte chemoattractant (BLC). Involved in B-cell migration into B-cell follicles of spleen and Peyer patches but not into those of mesenteric or peripheral lymph nodes. This Rattus norvegicus (Rat) protein is C-X-C chemokine receptor type 5 (Cxcr5).